The sequence spans 531 residues: Flavin-containing monooxygenase 3 (531 aa).

FAD contacts are provided by residues 9 to 13 (GAGVS), Glu-32, 40 to 41 (LW), and 61 to 62 (NS). NADP(+) contacts are provided by residues 60–61 (TN) and 195–198 (SGCD). Phosphoserine is present on Ser-401. Residues 511-531 (YSHFLRLLAVPVLIALFLVLI) traverse the membrane as a helical segment.

The protein belongs to the FMO family. FAD is required as a cofactor. As to expression, detected in liver and kidney (at protein level). Expressed in kidney and liver. Weakly expressed in lung. Does not seem to be expressed in brain, adipose tissue, or muscle.

Its subcellular location is the microsome membrane. It is found in the endoplasmic reticulum membrane. The catalysed reaction is trimethylamine + NADPH + O2 = trimethylamine N-oxide + NADP(+) + H2O. It carries out the reaction N,N-dimethylaniline + NADPH + O2 + H(+) = N,N-dimethylaniline N-oxide + NADP(+) + H2O. It catalyses the reaction hypotaurine + NADPH + O2 + H(+) = taurine + NADP(+) + H2O. The enzyme catalyses (S)-nicotine + NADPH + O2 = trans-(S)-nicotine N(1')-oxide + NADP(+) + H2O. The catalysed reaction is albendazole + NADPH + O2 + H(+) = albendazole S-oxide + NADP(+) + H2O. Essential hepatic enzyme that catalyzes the oxygenation of a wide variety of nitrogen- and sulfur-containing compounds including drugs as well as dietary compounds. Plays an important role in the metabolism of trimethylamine (TMA), via the production of trimethylamine N-oxide (TMAO) metabolite. TMA is generated by the action of gut microbiota using dietary precursors such as choline, choline containing compounds, betaine or L-carnitine. By regulating TMAO concentration, FMO3 directly impacts both platelet responsiveness and rate of thrombus formation. The sequence is that of Flavin-containing monooxygenase 3 (Fmo3) from Rattus norvegicus (Rat).